A 500-amino-acid polypeptide reads, in one-letter code: Putative beta-lactamase-like 1 (500 aa).

Belongs to the beta-lactamase family.

The protein is Putative beta-lactamase-like 1 (LACTBL1) of Homo sapiens (Human).